Consider the following 216-residue polypeptide: Redox-sensing transcriptional repressor Rex (216 aa).

The segment at residues V16–F55 is a DNA-binding region (H-T-H motif). G90–G95 contributes to the NAD(+) binding site.

This sequence belongs to the transcriptional regulatory Rex family. Homodimer.

It localises to the cytoplasm. In terms of biological role, modulates transcription in response to changes in cellular NADH/NAD(+) redox state. The protein is Redox-sensing transcriptional repressor Rex of Limosilactobacillus fermentum (strain NBRC 3956 / LMG 18251) (Lactobacillus fermentum).